Reading from the N-terminus, the 370-residue chain is Probable endopolygalacturonase A (370 aa).

The signal sequence occupies residues 1–19 (MPSAKPLFCLATLAGAALA). Positions 20–32 (APAPSRATDFNKR) are excised as a propeptide. A disulfide bridge links Cys-35 with Cys-50. PbH1 repeat units follow at residues 162–192 (SDNL…DISE), 193–214 (STYI…AINS), 215–235 (GENI…SIGS), 244–265 (VKNV…RIKT), 273–295 (VEDI…VIEQ), and 307–352 (SNGV…DITG). Catalysis depends on Asp-207, which acts as the Proton donor. The cysteines at positions 209 and 225 are disulfide-linked. The active site involves His-229. A glycan (N-linked (GlcNAc...) asparagine) is linked at Asn-246. 2 cysteine pairs are disulfide-bonded: Cys-335–Cys-340 and Cys-359–Cys-368.

Belongs to the glycosyl hydrolase 28 family.

The protein resides in the secreted. The catalysed reaction is (1,4-alpha-D-galacturonosyl)n+m + H2O = (1,4-alpha-D-galacturonosyl)n + (1,4-alpha-D-galacturonosyl)m.. Its function is as follows. Involved in maceration and soft-rotting of plant tissue. Hydrolyzes the 1,4-alpha glycosidic bonds of de-esterified pectate in the smooth region of the plant cell wall. This chain is Probable endopolygalacturonase A (pgaA), found in Aspergillus kawachii (strain NBRC 4308) (White koji mold).